The chain runs to 481 residues: Aspartyl/glutamyl-tRNA(Asn/Gln) amidotransferase subunit B (481 aa).

This sequence belongs to the GatB/GatE family. GatB subfamily. Heterotrimer of A, B and C subunits.

The catalysed reaction is L-glutamyl-tRNA(Gln) + L-glutamine + ATP + H2O = L-glutaminyl-tRNA(Gln) + L-glutamate + ADP + phosphate + H(+). It catalyses the reaction L-aspartyl-tRNA(Asn) + L-glutamine + ATP + H2O = L-asparaginyl-tRNA(Asn) + L-glutamate + ADP + phosphate + 2 H(+). Allows the formation of correctly charged Asn-tRNA(Asn) or Gln-tRNA(Gln) through the transamidation of misacylated Asp-tRNA(Asn) or Glu-tRNA(Gln) in organisms which lack either or both of asparaginyl-tRNA or glutaminyl-tRNA synthetases. The reaction takes place in the presence of glutamine and ATP through an activated phospho-Asp-tRNA(Asn) or phospho-Glu-tRNA(Gln). The chain is Aspartyl/glutamyl-tRNA(Asn/Gln) amidotransferase subunit B from Pseudomonas syringae pv. syringae (strain B728a).